We begin with the raw amino-acid sequence, 170 residues long: Acireductone dioxygenase (170 aa).

4 residues coordinate Fe(2+): His-99, His-101, Glu-105, and His-144. His-99, His-101, Glu-105, and His-144 together coordinate Ni(2+).

This sequence belongs to the acireductone dioxygenase (ARD) family. As to quaternary structure, monomer. It depends on Fe(2+) as a cofactor. The cofactor is Ni(2+).

The catalysed reaction is 1,2-dihydroxy-5-(methylsulfanyl)pent-1-en-3-one + O2 = 3-(methylsulfanyl)propanoate + CO + formate + 2 H(+). It catalyses the reaction 1,2-dihydroxy-5-(methylsulfanyl)pent-1-en-3-one + O2 = 4-methylsulfanyl-2-oxobutanoate + formate + 2 H(+). The protein operates within amino-acid biosynthesis; L-methionine biosynthesis via salvage pathway; L-methionine from S-methyl-5-thio-alpha-D-ribose 1-phosphate: step 5/6. Its function is as follows. Catalyzes 2 different reactions between oxygen and the acireductone 1,2-dihydroxy-3-keto-5-methylthiopentene (DHK-MTPene) depending upon the metal bound in the active site. Fe-containing acireductone dioxygenase (Fe-ARD) produces formate and 2-keto-4-methylthiobutyrate (KMTB), the alpha-ketoacid precursor of methionine in the methionine recycle pathway. Ni-containing acireductone dioxygenase (Ni-ARD) produces methylthiopropionate, carbon monoxide and formate, and does not lie on the methionine recycle pathway. The sequence is that of Acireductone dioxygenase from Bacillus cereus (strain ATCC 14579 / DSM 31 / CCUG 7414 / JCM 2152 / NBRC 15305 / NCIMB 9373 / NCTC 2599 / NRRL B-3711).